Here is a 398-residue protein sequence, read N- to C-terminus: tRNA-specific 2-thiouridylase MnmA (398 aa).

ATP contacts are provided by residues 19–26 (AMSGGVDS) and L45. Residue C113 is the Nucleophile of the active site. C113 and C210 are oxidised to a cystine. G137 provides a ligand contact to ATP. The interaction with tRNA stretch occupies residues 160-162 (RDQ). The active-site Cysteine persulfide intermediate is C210.

Belongs to the MnmA/TRMU family.

The protein resides in the cytoplasm. The catalysed reaction is S-sulfanyl-L-cysteinyl-[protein] + uridine(34) in tRNA + AH2 + ATP = 2-thiouridine(34) in tRNA + L-cysteinyl-[protein] + A + AMP + diphosphate + H(+). Catalyzes the 2-thiolation of uridine at the wobble position (U34) of tRNA, leading to the formation of s(2)U34. The protein is tRNA-specific 2-thiouridylase MnmA of Rhodopseudomonas palustris (strain HaA2).